The chain runs to 280 residues: MKYIGAHVSASGGVFNAPINATQIGAKAFALFTKNQRQWSAKALDNKTIDLWFKELEKSKIEPKHILPHDSYLINLGHPDSDAREKSIESFLDEVQRCEILALDRLNFHPGSHLRKISEEECLDNIAESMNRVIDKTSGVKLVIENTAGQGSNLGYKFEHLAYIIDKIEDKSRVGVCIDTCHMFTAGYDIRTREAYDKTWNEFEKIVGFKYLSGMHINDSKPELGSRVDRHDSLGCGKIGWDAFEFIMNDKRMNDIPLVLETIDESIWAEEIKTLYNFIK.

Histidine 69, histidine 109, glutamate 145, aspartate 179, histidine 182, histidine 216, aspartate 229, histidine 231, and glutamate 261 together coordinate Zn(2+).

Belongs to the AP endonuclease 2 family. Zn(2+) serves as cofactor.

It catalyses the reaction Endonucleolytic cleavage to 5'-phosphooligonucleotide end-products.. Its function is as follows. Endonuclease IV plays a role in DNA repair. It cleaves phosphodiester bonds at apurinic or apyrimidinic (AP) sites, generating a 3'-hydroxyl group and a 5'-terminal sugar phosphate. This chain is Probable endonuclease 4, found in Aliarcobacter butzleri (strain RM4018) (Arcobacter butzleri).